The chain runs to 337 residues: Fructose-1,6-bisphosphatase class 1 (337 aa).

Mg(2+)-binding residues include E90, D112, L114, and D115. Residues 115–118, N211, and K277 contribute to the substrate site; that span reads DGSS. E283 is a binding site for Mg(2+).

The protein belongs to the FBPase class 1 family. As to quaternary structure, homotetramer. Mg(2+) serves as cofactor.

It is found in the cytoplasm. It catalyses the reaction beta-D-fructose 1,6-bisphosphate + H2O = beta-D-fructose 6-phosphate + phosphate. The protein operates within carbohydrate biosynthesis; gluconeogenesis. In Azotobacter vinelandii (strain DJ / ATCC BAA-1303), this protein is Fructose-1,6-bisphosphatase class 1.